The primary structure comprises 199 residues: Large ribosomal subunit protein mL51 (199 aa).

A mitochondrion-targeting transit peptide spans 1-15; that stretch reads MNSNSLSRFTSIVRT.

This sequence belongs to the mitochondrion-specific ribosomal protein mL51 family. In terms of assembly, component of the mitochondrial ribosome large subunit (39S) which comprises a 16S rRNA and about 50 distinct proteins.

The protein resides in the mitochondrion. The polypeptide is Large ribosomal subunit protein mL51 (mrpl-51) (Caenorhabditis elegans).